Consider the following 401-residue polypeptide: Phosphoglycerate kinase (401 aa).

Substrate contacts are provided by residues 20 to 22, Arg35, 58 to 61, Arg117, and Arg154; these read DFN and HLGR. Residues Lys204, Gly298, Glu329, and 358 to 361 contribute to the ATP site; that span reads GGDS.

Belongs to the phosphoglycerate kinase family. In terms of assembly, monomer.

Its subcellular location is the cytoplasm. It catalyses the reaction (2R)-3-phosphoglycerate + ATP = (2R)-3-phospho-glyceroyl phosphate + ADP. Its pathway is carbohydrate degradation; glycolysis; pyruvate from D-glyceraldehyde 3-phosphate: step 2/5. The chain is Phosphoglycerate kinase from Bifidobacterium adolescentis (strain ATCC 15703 / DSM 20083 / NCTC 11814 / E194a).